Consider the following 268-residue polypeptide: Nickel import ATP-binding protein NikE (268 aa).

Positions 4 to 252 constitute an ABC transporter domain; the sequence is LNISGLSHHY…SSDAGRVLQN (249 aa). 45–52 contacts ATP; the sequence is GRSGCGKS.

It belongs to the ABC transporter superfamily. Nickel importer (TC 3.A.1.5.3) family. As to quaternary structure, the complex is composed of two ATP-binding proteins (NikD and NikE), two transmembrane proteins (NikB and NikC) and a solute-binding protein (NikA).

Its subcellular location is the cell inner membrane. The catalysed reaction is Ni(2+)(out) + ATP + H2O = Ni(2+)(in) + ADP + phosphate + H(+). In terms of biological role, part of the ABC transporter complex NikABCDE involved in nickel import. Responsible for energy coupling to the transport system. The protein is Nickel import ATP-binding protein NikE of Escherichia coli (strain K12).